A 767-amino-acid chain; its full sequence is Pyrin (767 aa).

Positions 1–92 (MAKTLGDHLL…AEELRKATGT (92 aa)) constitute a Pyrin domain. A disordered region spans residues 94 to 219 (HLIEENRVGG…LQGLYNNAPG (126 aa)). Polar residues-rich tracts occupy residues 126 to 142 (GTQQ…SSQA), 165 to 176 (LDSQTKPWTRST), and 183 to 208 (TQGT…SSAG). A Phosphoserine modification is found at S241. The interval 311 to 346 (TSLIGEERCPTSWTENGNGSPETTESSGETAGSILS) is disordered. Polar residues predominate over residues 321 to 340 (TSWTENGNGSPETTESSGET). The segment at 439–481 (QSLPQCPRHMKQVLLLFCEDHREPICLICRLSLEHQGHRVRPI) adopts a B box-type zinc-finger fold. Zn(2+)-binding residues include C444, H447, C467, and H473. Residues 481-510 (IEEAALEYKEQIREQLERLREMRGYVEEHR) adopt a coiled-coil conformation. Residues 489–647 (KEQIREQLER…CFSEMLSSEM (159 aa)) form a required for homotrimerization and induction of pyroptosomes region. The tract at residues 697–719 (GGSEPKDYLHPQPAQDTPELHEI) is disordered.

As to quaternary structure, homotrimer. Interacts (via the B box-type zinc finger) with PSTPIP1. Interacts (via the B30.2/SPRY domain) with several components of the inflammasome complex, including CASP1 p20 and p10 subunits, CASP5, PYCARD, NLRP1, NLRP2 and NLRP3, as well as with unprocessed IL1B; this interaction may lead to autophagic degradation of these proteins. Component of the AIM2 PANoptosome complex, a multiprotein complex that drives inflammatory cell death (PANoptosis). Interacts with NFKBIA and RELA. Interacts weakly with VASP and ACTR3. Interacts with active ULK1 (phosphorylated on 'Ser-317') and BECN1 simultaneously. Also interacts with ATG16L1 (via WD repeats), and with ATG8 family members, including GABARAP, GABARAPL1 and, to a lesser extent, GABARAPL2, MAP1LC3A/LC3A and MAP1LC3C/LC3C. Interacts with TRIM21. Interacts with YWHAB, YWHAE, YWHAG, YWHAH, YWHAQ and YWHAZ; the interaction is required for the down-regulation of pyrin pro-inflammatory activity. Phosphorylation at Ser-241 is required for the interaction with 14-3-3 proteins and down-regulation of pyrin pro-inflammatory activity. In terms of processing, degraded along with the delivery of its substrates to autolysosomal compartments (at protein level). In terms of tissue distribution, expressed in spleen peripheral blood granulocytes. Not expressed in lymphocytes, thymus, testis, ovary, heart, brain, lung, liver, kidney and muscle.

The protein resides in the cytoplasm. The protein localises to the cytoskeleton. Its subcellular location is the cell projection. It localises to the ruffle. It is found in the lamellipodium. The protein resides in the cytoplasmic vesicle. The protein localises to the autophagosome. Its subcellular location is the nucleus. Its function is as follows. Involved in the regulation of innate immunity and the inflammatory response in response to IFNG/IFN-gamma. Organizes autophagic machinery by serving as a platform for the assembly of ULK1, Beclin 1/BECN1, ATG16L1, and ATG8 family members and recognizes specific autophagy targets, thus coordinating target recognition with assembly of the autophagic apparatus and initiation of autophagy. Acts as an autophagy receptor for the degradation of several inflammasome components, including CASP1, NLRP1 and NLRP3, hence preventing excessive IL1B- and IL18-mediated inflammation. However, it can also have a positive effect in the inflammatory pathway, acting as an innate immune sensor that triggers PYCARD/ASC specks formation, caspase-1 activation, and IL1B and IL18 production. Together with AIM2, also acts as a mediator of pyroptosis, necroptosis and apoptosis (PANoptosis), an integral part of host defense against pathogens, in response to bacterial infection. It is required for PSTPIP1-induced PYCARD/ASC oligomerization and inflammasome formation. Recruits PSTPIP1 to inflammasomes, and is required for PSTPIP1 oligomerization. This is Pyrin from Mus musculus (Mouse).